A 413-amino-acid chain; its full sequence is Multifunctional CCA protein (413 aa).

Residues G8 and R11 each coordinate ATP. G8 and R11 together coordinate CTP. The Mg(2+) site is built by D21 and D23. ATP-binding residues include R91, R137, and R140. Residues R91, R137, and R140 each coordinate CTP. Residues 228-329 (TGIHTLMVLA…IKIFDKADLW (102 aa)) form the HD domain.

The protein belongs to the tRNA nucleotidyltransferase/poly(A) polymerase family. Bacterial CCA-adding enzyme type 1 subfamily. Monomer. Can also form homodimers and oligomers. Requires Mg(2+) as cofactor. The cofactor is Ni(2+).

The enzyme catalyses a tRNA precursor + 2 CTP + ATP = a tRNA with a 3' CCA end + 3 diphosphate. It carries out the reaction a tRNA with a 3' CCA end + 2 CTP + ATP = a tRNA with a 3' CCACCA end + 3 diphosphate. Functionally, catalyzes the addition and repair of the essential 3'-terminal CCA sequence in tRNAs without using a nucleic acid template. Adds these three nucleotides in the order of C, C, and A to the tRNA nucleotide-73, using CTP and ATP as substrates and producing inorganic pyrophosphate. tRNA 3'-terminal CCA addition is required both for tRNA processing and repair. Also involved in tRNA surveillance by mediating tandem CCA addition to generate a CCACCA at the 3' terminus of unstable tRNAs. While stable tRNAs receive only 3'-terminal CCA, unstable tRNAs are marked with CCACCA and rapidly degraded. In Shewanella woodyi (strain ATCC 51908 / MS32), this protein is Multifunctional CCA protein.